A 296-amino-acid polypeptide reads, in one-letter code: tRNA dimethylallyltransferase (296 aa).

An ATP-binding site is contributed by 2–9 (GPTASGKT). A substrate-binding site is contributed by 4–9 (TASGKT). Interaction with substrate tRNA regions lie at residues 27–30 (DSAL), 151–155 (QRLSR), and 232–237 (RCVGYR).

Belongs to the IPP transferase family. In terms of assembly, monomer. Requires Mg(2+) as cofactor.

It carries out the reaction adenosine(37) in tRNA + dimethylallyl diphosphate = N(6)-dimethylallyladenosine(37) in tRNA + diphosphate. Catalyzes the transfer of a dimethylallyl group onto the adenine at position 37 in tRNAs that read codons beginning with uridine, leading to the formation of N6-(dimethylallyl)adenosine (i(6)A). This chain is tRNA dimethylallyltransferase, found in Shewanella sp. (strain ANA-3).